A 460-amino-acid chain; its full sequence is uncharacterized protein (460 aa).

The TRAM domain maps to 6–64; it reads PVKKNNDYEIYIDDFGNMGEGIGKIDNFTVFVKDAVKGEKVRAKIIKVNKSFAIGKLID. The [4Fe-4S] cluster site is built by cysteine 77, cysteine 83, cysteine 86, and cysteine 166. S-adenosyl-L-methionine-binding residues include glutamine 290, tyrosine 319, glutamate 340, and aspartate 388. The Nucleophile role is filled by cysteine 415.

The protein belongs to the class I-like SAM-binding methyltransferase superfamily. RNA M5U methyltransferase family.

This is an uncharacterized protein from Clostridium acetobutylicum (strain ATCC 824 / DSM 792 / JCM 1419 / IAM 19013 / LMG 5710 / NBRC 13948 / NRRL B-527 / VKM B-1787 / 2291 / W).